We begin with the raw amino-acid sequence, 433 residues long: UDP-N-acetylglucosamine 1-carboxyvinyltransferase (433 aa).

34–35 (KN) contacts phosphoenolpyruvate. Arginine 104 is a binding site for UDP-N-acetyl-alpha-D-glucosamine. Cysteine 128 functions as the Proton donor in the catalytic mechanism. 2-(S-cysteinyl)pyruvic acid O-phosphothioketal is present on cysteine 128. UDP-N-acetyl-alpha-D-glucosamine-binding residues include aspartate 320 and isoleucine 342.

It belongs to the EPSP synthase family. MurA subfamily.

It is found in the cytoplasm. It catalyses the reaction phosphoenolpyruvate + UDP-N-acetyl-alpha-D-glucosamine = UDP-N-acetyl-3-O-(1-carboxyvinyl)-alpha-D-glucosamine + phosphate. The protein operates within cell wall biogenesis; peptidoglycan biosynthesis. Functionally, cell wall formation. Adds enolpyruvyl to UDP-N-acetylglucosamine. This is UDP-N-acetylglucosamine 1-carboxyvinyltransferase from Synechococcus sp. (strain CC9605).